The sequence spans 1905 residues: Transport and Golgi organization protein 1 homolog (1905 aa).

Residues 1-22 (MAAAQGLLFWLLLLGPPCRVPG) form the signal peptide. Residues 23-1141 (QPEQDPGRRF…EPASVTPLEN (1119 aa)) are Lumenal-facing. The SH3 domain maps to 45–107 (MLMYRGEALE…PKDLIQVVHE (63 aa)). The segment covering 154–167 (SEKVKEKTAQRVEE) has biased composition (basic and acidic residues). Disordered stretches follow at residues 154-259 (SEKV…HEQE) and 313-621 (TVGK…IKDR). A glycan (N-linked (GlcNAc...) asparagine) is linked at Asn-173. Positions 173-190 (NESDAEPEPGEPNSEESE) are enriched in acidic residues. Over residues 198–208 (AELRERSEAQK) the composition is skewed to basic and acidic residues. The span at 209-220 (SHPQVNSQTGHA) shows a compositional bias: polar residues. 2 positions are modified to phosphoserine: Ser-226 and Ser-229. Positions 234 to 245 (LQDKLKVPDSEN) are enriched in basic and acidic residues. A glycan (N-linked (GlcNAc...) asparagine) is linked at Asn-246. A compositionally biased stretch (polar residues) spans 246-255 (NKTSNSSQVS). Residues 317–327 (EEEENKEDFDE) show a composition bias toward acidic residues. Basic and acidic residues-rich tracts occupy residues 337 to 366 (EDTKSPGHSGIEKHPTEKEQNSNKEHKVEE) and 373 to 386 (KKGDKEIPKHREDT). The span at 392 to 414 (MEGEENTDTDLESSDSKEEDDPL) shows a compositional bias: acidic residues. Basic and acidic residues-rich tracts occupy residues 419 to 436 (RLGKPRPEDHTDPEKAAD) and 459 to 480 (HMKDKGRKVEEPRRDWVQHEVG). The stretch at 467-527 (VEEPRRDWVQ…ANQENDLKGA (61 aa)) forms a coiled coil. Positions 488 to 500 (DQAVQGSSQSGHL) are enriched in polar residues. Residues 531-542 (ISKEMLHEEKPS) show a composition bias toward basic and acidic residues. A glycan (N-linked (GlcNAc...) asparagine) is linked at Asn-627. Disordered regions lie at residues 657 to 908 (QQGG…PHAP), 1036 to 1059 (APPAAAQPVEGGWDGPAEDTQPPL), and 1085 to 1118 (PVTRDMGTSGVAQKPQTEEDGDPGIITPQGTPVD). A compositionally biased stretch (basic and acidic residues) spans 669 to 714 (VSEKRELPEEEVTRVTKDASDEGQEVRKTGQTDSIEGRGFRPKEPN). Residues 715 to 730 (PEDEDYSPEELLEDEN) show a composition bias toward acidic residues. 4 stretches are compositionally biased toward basic and acidic residues: residues 736–751 (QSKERSPEIQDKRLDV), 766–789 (TDPETEKNKEETRHVSENERKNET), 842–859 (SQKKDPDYLKEDNHEGHP), and 868–884 (PGVEPSKEDDEHAEKFV). Residue Ser-873 is modified to Phosphoserine. An intramembrane segment occupies 1142–1162 (AIAFIYSLVFHLTKTLLATLP). The Lumenal portion of the chain corresponds to 1163-1173 (DDVQPGPDFYG). A helical membrane pass occupies residues 1174–1194 (LPWKPVLITASLGIVSFAVFF). Residues 1195–1905 (WRTVLAVKSR…DCSPALKQSP (711 aa)) lie on the Cytoplasmic side of the membrane. Residues 1208-1647 (VTEQQISEKL…VIVKPMPGRP (440 aa)) are mediates interaction with MIA2. Residues 1211 to 1393 (QQISEKLKNI…SQKDLEVALT (183 aa)) adopt a coiled-coil conformation. The interval 1416-1443 (SESEDQNKGGSESDELANGEVGGDRSEK) is disordered. Ser-1428 carries the post-translational modification Phosphoserine. Residues 1484–1636 (NLEDQIKKLE…TQKMAMMQEE (153 aa)) are a coiled coil. The interval 1639 to 1905 (IVKPMPGRPN…DCSPALKQSP (267 aa)) is disordered. Residues 1647–1664 (PNTQNPPRRGPLSQNGSF) are compositionally biased toward polar residues. A phosphoserine mark is found at Ser-1663, Ser-1675, Ser-1703, Ser-1724, Ser-1738, and Ser-1742. The tract at residues 1748 to 1905 (DEGKVSMAAK…DCSPALKQSP (158 aa)) is proline-rich domain (PRD); mediates interaction with the COPII coat subunits SEC23A and SEC23B. Residues 1776 to 1806 (LLPPIRYGPPPQLCGPFGPRPLPPPFGPGMR) show a composition bias toward pro residues. Arg-1781 bears the Asymmetric dimethylarginine mark. Positions 1785 to 1845 (PPQLCGPFGP…GHAPFRPLGS (61 aa)) are SEC16A-interacting region (SIR); required for its localization to endoplasmic reticulum exit sites and for its interaction with SEC16A. Residues 1821 to 1831 (GKRDLPLDPRE) show a composition bias toward basic and acidic residues. 2 positions are modified to phosphoserine: Ser-1890 and Ser-1904. The segment covering 1891-1905 (QGASQDCSPALKQSP) has biased composition (polar residues).

It belongs to the MIA/OTOR family. Tango1 subfamily. In terms of assembly, interacts with MIA2. Interacts (via SH3 domain) with COL7A1. Interacts with the COPII coat subunits SEC23A, SEC23B and maybe SEC24C. May interact with APOB and MIA2. Interacts with SEC16A.

It is found in the endoplasmic reticulum membrane. Plays a role in the transport of cargos that are too large to fit into COPII-coated vesicles and require specific mechanisms to be incorporated into membrane-bound carriers and exported from the endoplasmic reticulum. This protein is required for collagen VII (COL7A1) secretion by loading COL7A1 into transport carriers. It may participate in cargo loading of COL7A1 at endoplasmic reticulum exit sites by binding to COPII coat subunits Sec23/24 and guiding SH3-bound COL7A1 into a growing carrier. Does not play a role in global protein secretion and is apparently specific to COL7A1 cargo loading. However, it may participate in secretion of other proteins in cells that do not secrete COL7A1. It is also specifically required for the secretion of lipoproteins by participating in their export from the endoplasmic reticulum. Required for correct assembly of COPII coat components at endoplasmic reticulum exit sites (ERES) and for the localization of SEC16A and membrane-bound ER-resident complexes consisting of MIA2 and PREB/SEC12 to ERES. The polypeptide is Transport and Golgi organization protein 1 homolog (Bos taurus (Bovine)).